The chain runs to 411 residues: UPF0597 protein Fnod_1278 (411 aa).

The protein belongs to the UPF0597 family.

The protein is UPF0597 protein Fnod_1278 of Fervidobacterium nodosum (strain ATCC 35602 / DSM 5306 / Rt17-B1).